The chain runs to 443 residues: Phosphoglucosamine mutase (443 aa).

The Phosphoserine intermediate role is filled by serine 101. Positions 101, 239, 241, and 243 each coordinate Mg(2+). At serine 101 the chain carries Phosphoserine.

The protein belongs to the phosphohexose mutase family. Requires Mg(2+) as cofactor. Activated by phosphorylation.

The enzyme catalyses alpha-D-glucosamine 1-phosphate = D-glucosamine 6-phosphate. Functionally, catalyzes the conversion of glucosamine-6-phosphate to glucosamine-1-phosphate. The chain is Phosphoglucosamine mutase from Francisella tularensis subsp. novicida (strain U112).